The primary structure comprises 117 residues: MNNAIMDMVDKANQKENAPQFDIGDTVDVHSKILEGNKERIQVFTGVVIGRSGKGAQEMFTVRRIVAGEGVERKFPVHSPRIEKVEVKRSGVTRRAKLYFLRDRVGKAVRLKERRRV.

It belongs to the bacterial ribosomal protein bL19 family.

Functionally, this protein is located at the 30S-50S ribosomal subunit interface and may play a role in the structure and function of the aminoacyl-tRNA binding site. This is Large ribosomal subunit protein bL19 from Rhodopirellula baltica (strain DSM 10527 / NCIMB 13988 / SH1).